Reading from the N-terminus, the 548-residue chain is Palmitoyltransferase pfa3 (548 aa).

Residues 1–32 (MMATLATSPPTSPTWPKRRPRAWALRCERYCC) lie on the Cytoplasmic side of the membrane. A helical transmembrane segment spans residues 33–53 (AAATYFPLAFVYSLTTWAVYV). Residues 54–70 (EASIGLKPSRSPWIGLP) lie on the Extracellular side of the membrane. Residues 71–91 (TSILGVLLYICLNASYTVAVF) form a helical membrane-spanning segment. The Cytoplasmic segment spans residues 92–173 (TDPGSPLTTG…ATCVGLYNYK (82 aa)). Residues 130 to 180 (RYCKKCQCPKPDRAHHCSTCKRCVLKMDHHCPWLATCVGLYNYKAFLLFLI) enclose the DHHC domain. Residues 174-194 (AFLLFLIYTSLFCWVDFAVSA) traverse the membrane as a helical segment. Topologically, residues 195–215 (TWIWTEVFNDAPYLETMLPVN) are extracellular. The chain crosses the membrane as a helical span at residues 216-236 (VVLLAILGGIIGLVLTGFTAW). The Cytoplasmic portion of the chain corresponds to 237–548 (HISLAVRGMT…EDSSEWRDWD (312 aa)). Disordered stretches follow at residues 313–339 (RAEEGEERLSPAPEQPASHGVSDDQLT) and 463–548 (NPHQ…RDWD). A compositionally biased stretch (polar residues) spans 508–535 (DPLNQQSVPANGAVNQLQKANEASSATT). Residues 536-548 (NRREDSSEWRDWD) are compositionally biased toward basic and acidic residues.

Belongs to the DHHC palmitoyltransferase family. PFA3 subfamily. In terms of processing, autopalmitoylated.

The protein resides in the vacuole membrane. The catalysed reaction is L-cysteinyl-[protein] + hexadecanoyl-CoA = S-hexadecanoyl-L-cysteinyl-[protein] + CoA. Functionally, palmitoyltransferase specific for VAC8. Palmitoylates VAC8 at one or more of its N-terminal cysteine residues, which is required for its proper membrane localization. The polypeptide is Palmitoyltransferase pfa3 (pfa3) (Aspergillus fumigatus (strain ATCC MYA-4609 / CBS 101355 / FGSC A1100 / Af293) (Neosartorya fumigata)).